The primary structure comprises 293 residues: Foldase protein PrsA 2 (293 aa).

Positions 1–20 (MKKKLILGLVMMMALFSLAA) are cleaved as a signal peptide. A lipid anchor (N-palmitoyl cysteine) is attached at C21. C21 carries S-diacylglycerol cysteine lipidation. One can recognise a PpiC domain in the interval 135–226 (QPDITVSHIL…YGYHIIQMDK (92 aa)).

Belongs to the PrsA family.

It localises to the cell membrane. The catalysed reaction is [protein]-peptidylproline (omega=180) = [protein]-peptidylproline (omega=0). Plays a major role in protein secretion by helping the post-translocational extracellular folding of several secreted proteins. This chain is Foldase protein PrsA 2, found in Listeria monocytogenes serotype 4b (strain F2365).